The sequence spans 406 residues: CinA-like protein (406 aa).

This sequence belongs to the CinA family.

This chain is CinA-like protein, found in Pseudothermotoga lettingae (strain ATCC BAA-301 / DSM 14385 / NBRC 107922 / TMO) (Thermotoga lettingae).